Here is a 308-residue protein sequence, read N- to C-terminus: Taste receptor type 2 member 107 (308 aa).

Over 1–7 (MLNSAEG) the chain is Extracellular. The chain crosses the membrane as a helical span at residues 8–28 (ILLCVVTSEAVLGVLGDTYIA). At 29-43 (LFNCMDYAKNKKLSK) the chain is on the cytoplasmic side. A helical membrane pass occupies residues 44-64 (IGFILIGLAISRIGVVWIIIL). Residues 65–87 (QGYIQVFFPHMLTSGNITEYITY) lie on the Extracellular side of the membrane. N80 is a glycosylation site (N-linked (GlcNAc...) asparagine). Residues 88–108 (IWVFLNHLSVWFVTNLNILYF) traverse the membrane as a helical segment. The Cytoplasmic segment spans residues 109 to 125 (LKIANFSNSVFLWLKRR). The helical transmembrane segment at 126-146 (VNAVFIFLSGCLLTSWLLCFP) threads the bilayer. The Extracellular portion of the chain corresponds to 147–180 (QMTKILQNSKMHQRNTSWVHQRKNYFLINQSVTN). N-linked (GlcNAc...) asparagine glycans are attached at residues N161 and N175. The helical transmembrane segment at 181–201 (LGIFFFIIVSLITCFLLIVFL) threads the bilayer. Topologically, residues 202-232 (WRHVRQMHSDVSGFRDHSTKVHVKAMKFLIS) are cytoplasmic. The chain crosses the membrane as a helical span at residues 233 to 253 (FMVFFILHFVGLSIEVLCFIL). The Extracellular segment spans residues 254 to 258 (PQNKL). Residues 259 to 279 (LFITGLTATCLYPCGHSIIVI) traverse the membrane as a helical segment. The Cytoplasmic portion of the chain corresponds to 280–308 (LGNKQLKQASLKALQQLKCCETKGNFRVK).

The protein belongs to the G-protein coupled receptor T2R family.

Its subcellular location is the membrane. In terms of biological role, putative taste receptor which may play a role in the perception of bitterness. The chain is Taste receptor type 2 member 107 from Mus musculus (Mouse).